The following is a 715-amino-acid chain: Fatty acid oxidation complex subunit alpha (715 aa).

The interval Met1–Pro190 is enoyl-CoA hydratase. Residues Gly306–Asn715 are 3-hydroxyacyl-CoA dehydrogenase.

In the N-terminal section; belongs to the enoyl-CoA hydratase/isomerase family. It in the central section; belongs to the 3-hydroxyacyl-CoA dehydrogenase family. Heterotetramer of two alpha chains (FadJ) and two beta chains (FadI).

It is found in the cytoplasm. The enzyme catalyses a (3S)-3-hydroxyacyl-CoA = a (2E)-enoyl-CoA + H2O. The catalysed reaction is a 4-saturated-(3S)-3-hydroxyacyl-CoA = a (3E)-enoyl-CoA + H2O. It catalyses the reaction a (3S)-3-hydroxyacyl-CoA + NAD(+) = a 3-oxoacyl-CoA + NADH + H(+). It carries out the reaction (3S)-3-hydroxybutanoyl-CoA = (3R)-3-hydroxybutanoyl-CoA. It participates in lipid metabolism; fatty acid beta-oxidation. Functionally, catalyzes the formation of a hydroxyacyl-CoA by addition of water on enoyl-CoA. Also exhibits 3-hydroxyacyl-CoA epimerase and 3-hydroxyacyl-CoA dehydrogenase activities. This chain is Fatty acid oxidation complex subunit alpha, found in Salmonella enteritidis PT4 (strain P125109).